The sequence spans 942 residues: Nuclear receptor coactivator 7 (942 aa).

Met-1 bears the N-acetylmethionine mark. Residues 1 to 12 (MDTKEEKKERKQ) are compositionally biased toward basic and acidic residues. The interval 1–46 (MDTKEEKKERKQSYFARLKKKKQAKQNAETASAVATRTHTGKEDNN) is disordered. A coiled-coil region spans residues 4-29 (KEEKKERKQSYFARLKKKKQAKQNAE). The segment covering 25 to 38 (KQNAETASAVATRT) has biased composition (polar residues). Residue Ser-89 is modified to Phosphoserine. One can recognise a LysM domain in the interval 114–157 (MEYTAGNQDTLNSIALKFNITPNKLVELNKLFTHTIVPGQVLFV). Thr-134 is modified (phosphothreonine). Residues 161–188 (NSPSSTLRLSSSSPGATVSPSSSDAEYD) are disordered. Residues 162-183 (SPSSTLRLSSSSPGATVSPSSS) are compositionally biased toward low complexity. Phosphoserine is present on residues Ser-179, Ser-183, Ser-208, Ser-209, and Ser-211. The interval 324–416 (KFKSINKEKR…ENFLGEDDDF (93 aa)) is disordered. The span at 356 to 368 (GHTPTKPSGSSVS) shows a compositional bias: polar residues. A compositionally biased stretch (basic and acidic residues) spans 369–381 (EKLKKLDSSRETS). Residues Ser-441, Ser-500, and Ser-502 each carry the phosphoserine modification. A TLDc domain is found at 781-942 (ALLENMHIEQ…VQDLEVWAFD (162 aa)).

This sequence belongs to the OXR1 family. As to quaternary structure, interacts with ESR1, ESR2A, ESR2B, THRB, PPARG and RARA in a ligand-inducible manner. Interacts with the heterodimer AHR-ARNT. As to expression, highly expressed in brain. Weakly expressed in mammary gland, ovary, uterus, prostate, stomach, bladder, spinal cord and pancreas. Expressed in cancer cell line.

It localises to the nucleus. Functionally, enhances the transcriptional activities of several nuclear receptors. Involved in the coactivation of different nuclear receptors, such as ESR1, THRB, PPARG and RARA. The sequence is that of Nuclear receptor coactivator 7 (NCOA7) from Homo sapiens (Human).